The sequence spans 222 residues: Probable GTP-binding protein EngB (222 aa).

The EngB-type G domain occupies 23–217 (NASEIVFLGR…REEIVKYTLG (195 aa)). GTP contacts are provided by residues 31-38 (GRSNVGKS), 57-61 (GKTQL), 82-85 (DLPG), 152-155 (TKAD), and 191-193 (FSA). Positions 38 and 59 each coordinate Mg(2+).

The protein belongs to the TRAFAC class TrmE-Era-EngA-EngB-Septin-like GTPase superfamily. EngB GTPase family. Requires Mg(2+) as cofactor.

In terms of biological role, necessary for normal cell division and for the maintenance of normal septation. In Helicobacter hepaticus (strain ATCC 51449 / 3B1), this protein is Probable GTP-binding protein EngB.